Consider the following 114-residue polypeptide: uncharacterized protein (114 aa).

It is found in the mitochondrion. This is an uncharacterized protein from Arabidopsis thaliana (Mouse-ear cress).